Consider the following 179-residue polypeptide: Iron sulfur cluster assembly protein 1, mitochondrial (179 aa).

Residues 160 to 179 (RSVKQPTLGPEAAQAETIAT) form a disordered region.

Belongs to the NifU family. In terms of assembly, component of the core Fe-S cluster (ISC) assembly machinery. The cofactor is [2Fe-2S] cluster.

The protein localises to the mitochondrion matrix. It functions in the pathway cofactor biosynthesis; iron-sulfur cluster biosynthesis. Functionally, scaffold protein for the de novo synthesis of iron-sulfur (Fe-S) clusters within mitochondria, which is required for maturation of both mitochondrial and cytoplasmic [2Fe-2S] and [4Fe-4S] proteins. First, a [2Fe-2S] cluster is transiently assembled on the scaffold protein ISU1. In a second step, the cluster is released from ISU1, transferred to a glutaredoxin, followed by the formation of mitochondrial [2Fe-2S] proteins, the synthesis of [4Fe-4S] clusters and their target-specific insertion into the recipient apoproteins. Cluster assembly on ISU1 depends on the function of the cysteine desulfurase complex NFS1-ISD11, which serves as the sulfur donor for cluster synthesis, the iron-binding protein frataxin as the putative iron donor, and the electron transfer chain comprised of ferredoxin reductase and ferredoxin, which receive their electrons from NADH. The polypeptide is Iron sulfur cluster assembly protein 1, mitochondrial (ISU1) (Debaryomyces hansenii (strain ATCC 36239 / CBS 767 / BCRC 21394 / JCM 1990 / NBRC 0083 / IGC 2968) (Yeast)).